Here is a 132-residue protein sequence, read N- to C-terminus: Rubredoxin-1 (132 aa).

The region spanning 1-53 is the Rubredoxin-like domain; sequence MSRYQCPDCQYIYDENKGEPHEGFHPNTSWNDIPKDWACPDCAVRDKVDFIFL. Residues Cys-6, Cys-9, Cys-39, and Cys-42 each coordinate Fe cation. The interval 108 to 132 is disordered; that stretch reads TEVLDQASTPQVVRKSSTRKKMRNK. The span at 113–122 shows a compositional bias: polar residues; that stretch reads QASTPQVVRK. Basic residues predominate over residues 123–132; the sequence is SSTRKKMRNK.

The protein belongs to the rubredoxin family. Fe(3+) serves as cofactor.

Its subcellular location is the cytoplasm. The protein operates within hydrocarbon metabolism; alkane degradation. Its function is as follows. Not known. Probably involved in an electron transport pathway, but not required for the hydrocarbon hydroxylating system. Seems to be non-functional. This chain is Rubredoxin-1 (alkF), found in Ectopseudomonas oleovorans (Pseudomonas oleovorans).